We begin with the raw amino-acid sequence, 995 residues long: ATP-dependent RNA helicase DBP10 (995 aa).

The disordered stretch occupies residues 1–120 (MAGVQKRKRD…TQTGDDEDDV (120 aa)). 2 stretches are compositionally biased toward acidic residues: residues 12-25 (EDQD…DDIA) and 37-50 (SESD…EVEA). The span at 71 to 81 (VNNKKKAENKD) shows a compositional bias: basic and acidic residues. Ser-101 is modified (phosphoserine). The Q motif motif lies at 137 to 165 (GSFPSFGLSKIVLNNIKRKGFRQPTPIQR). The Helicase ATP-binding domain occupies 168-340 (IPLILQSRDI…KAGLVNPVLV (173 aa)). 181 to 188 (ARTGSGKT) contacts ATP. The DEAD box signature appears at 288–291 (DEAD). 2 disordered regions span residues 389–427 (LQNS…PAAN) and 889–973 (GSRE…EQIR). Phosphoserine is present on residues Ser-398 and Ser-400. 2 stretches are compositionally biased toward basic residues: residues 407 to 422 (QKKR…RKQK) and 914 to 924 (VRGKFKHKQMK). One can recognise a Helicase C-terminal domain in the interval 418-568 (FRKQKMPAAN…PMYDSLVDVM (151 aa)). Basic and acidic residues predominate over residues 964–973 (SELKSTEQIR).

This sequence belongs to the DEAD box helicase family. DDX54/DBP10 subfamily. In terms of assembly, interacts with RRP1 and associates with pre-ribosomal particles.

It is found in the nucleus. The protein localises to the nucleolus. The enzyme catalyses ATP + H2O = ADP + phosphate + H(+). ATP-binding RNA helicase involved in the biogenesis of 60S ribosomal subunits and is required for the normal formation of 25S and 5.8S rRNAs. This is ATP-dependent RNA helicase DBP10 (DBP10) from Saccharomyces cerevisiae (strain ATCC 204508 / S288c) (Baker's yeast).